Consider the following 354-residue polypeptide: Lysophosphatidic acid receptor 3 (354 aa).

Residues 1 to 31 are Extracellular-facing; the sequence is MNECHYDKRMDFFYNRSNTDTADEWTGTKLV. N-linked (GlcNAc...) asparagine glycosylation occurs at N15. Residues 32-52 form a helical membrane-spanning segment; it reads IVLCVGTFFCLFIFFSNSLVI. Over 53 to 67 the chain is Cytoplasmic; sequence AAVITNRKFHFPFYY. The helical transmembrane segment at 68–88 threads the bilayer; sequence LLANLAAADFFAGIAYVFLMF. The Extracellular segment spans residues 89–101; the sequence is NTGPVSKTLTVNR. The helical transmembrane segment at 102–124 threads the bilayer; it reads WFLRQGLLDTSLTASLANLLVIA. At 125–146 the chain is on the cytoplasmic side; the sequence is VERHMSIMRMRVHSNLTKKRVT. The helical transmembrane segment at 147-167 threads the bilayer; that stretch reads LLILLVWAIAIFMGAVPTLGW. Residues 168-186 are Extracellular-facing; the sequence is NCLCNISACSSLAPIYSRS. A glycan (N-linked (GlcNAc...) asparagine) is linked at N172. A helical membrane pass occupies residues 187-207; it reads YLIFWTVSNLLAFFIMVAVYV. The Cytoplasmic segment spans residues 208–240; that stretch reads RIYMYVKRKTNVLSPHTSGSISRRRAPMKLMKT. Residues 241-261 form a helical membrane-spanning segment; the sequence is VMTVLGAFVVCWTPGLVVLLL. Residues 262–276 are Extracellular-facing; that stretch reads DGLNCKQCNVQHVKR. A helical membrane pass occupies residues 277–295; that stretch reads WFLLLALLNSVMNPIIYSY. The Cytoplasmic portion of the chain corresponds to 296–354; sequence KDEDMYNTMRKMICCALQDSNTERRPSRNPSTIHSRSETGSQYLEDSISQGPVCNKNGS. Residue C309 is the site of S-palmitoyl cysteine attachment. Positions 315 to 354 are disordered; that stretch reads SNTERRPSRNPSTIHSRSETGSQYLEDSISQGPVCNKNGS. Polar residues predominate over residues 323 to 354; sequence RNPSTIHSRSETGSQYLEDSISQGPVCNKNGS.

Belongs to the G-protein coupled receptor 1 family. As to expression, most abundantly expressed in testes, kidney, and lung, with moderate levels in small intestine, and low levels in heart, stomach, spleen, and adult and perinatal brain. Little or no expression in embryonic brain, liver, or thymus.

It localises to the cell membrane. Functionally, receptor for lysophosphatidic acid (LPA), a mediator of diverse cellular activities. Seems to be coupled to the G(i)/G(o) and G(q) families of heteromeric G proteins. In Mus musculus (Mouse), this protein is Lysophosphatidic acid receptor 3 (Lpar3).